The chain runs to 576 residues: Arginine--tRNA ligase (576 aa).

Positions 122 to 132 match the 'HIGH' region motif; sequence PNVAKEMHVGH.

This sequence belongs to the class-I aminoacyl-tRNA synthetase family. In terms of assembly, monomer.

It localises to the cytoplasm. The catalysed reaction is tRNA(Arg) + L-arginine + ATP = L-arginyl-tRNA(Arg) + AMP + diphosphate. In Serratia proteamaculans (strain 568), this protein is Arginine--tRNA ligase.